The sequence spans 222 residues: NADH dehydrogenase [ubiquinone] iron-sulfur protein 8-B, mitochondrial (222 aa).

4Fe-4S ferredoxin-type domains are found at residues 114–143 (RRYPTGEERCIACKLCEAVCPAQAITIEAE) and 153–182 (TRYDIDMTKCIYCGFCQEACPVDAIVEGPN). [4Fe-4S] cluster contacts are provided by Cys123, Cys126, Cys129, Cys133, Cys162, Cys165, Cys168, and Cys172.

The protein belongs to the complex I 23 kDa subunit family. Complex I is composed of at least 49 different subunits. This is a component of the iron-sulfur (IP) fragment of the enzyme. [4Fe-4S] cluster is required as a cofactor.

The protein resides in the mitochondrion. The enzyme catalyses a ubiquinone + NADH + 5 H(+)(in) = a ubiquinol + NAD(+) + 4 H(+)(out). Core subunit of the mitochondrial membrane respiratory chain NADH dehydrogenase (Complex I) that is believed to belong to the minimal assembly required for catalysis. Complex I functions in the transfer of electrons from NADH to the respiratory chain. The immediate electron acceptor for the enzyme is believed to be ubiquinone. May donate electrons to ubiquinone. This Arabidopsis thaliana (Mouse-ear cress) protein is NADH dehydrogenase [ubiquinone] iron-sulfur protein 8-B, mitochondrial.